Here is a 698-residue protein sequence, read N- to C-terminus: Elongation factor G (698 aa).

The tr-type G domain occupies 8-290; the sequence is ERYRNIGISA…AVIELLPSPV (283 aa). GTP contacts are provided by residues 17–24, 88–92, and 142–145; these read AHIDAGKT, DTPGH, and NKMD.

The protein belongs to the TRAFAC class translation factor GTPase superfamily. Classic translation factor GTPase family. EF-G/EF-2 subfamily.

The protein resides in the cytoplasm. Its function is as follows. Catalyzes the GTP-dependent ribosomal translocation step during translation elongation. During this step, the ribosome changes from the pre-translocational (PRE) to the post-translocational (POST) state as the newly formed A-site-bound peptidyl-tRNA and P-site-bound deacylated tRNA move to the P and E sites, respectively. Catalyzes the coordinated movement of the two tRNA molecules, the mRNA and conformational changes in the ribosome. The sequence is that of Elongation factor G from Aromatoleum aromaticum (strain DSM 19018 / LMG 30748 / EbN1) (Azoarcus sp. (strain EbN1)).